A 522-amino-acid chain; its full sequence is Mediator of RNA polymerase II transcription subunit 1.2 (522 aa).

Residues 13–40 (LLEQRKNQELNIEHIDEEMRLEQVRQAA) are a coiled coil.

It belongs to the Mediator complex subunit 1 family. Component of the Mediator complex.

It localises to the nucleus. Its function is as follows. Component of the Mediator complex, a coactivator involved in the regulated transcription of nearly all RNA polymerase II-dependent genes. Mediator functions as a bridge to convey information from gene-specific regulatory proteins to the basal RNA polymerase II transcription machinery. Mediator is recruited to promoters by direct interactions with regulatory proteins and serves as a scaffold for the assembly of a functional preinitiation complex with RNA polymerase II and the general transcription factors. The chain is Mediator of RNA polymerase II transcription subunit 1.2 (mdt-1.2) from Caenorhabditis elegans.